A 226-amino-acid chain; its full sequence is uncharacterized protein (226 aa).

The chain crosses the membrane as a helical span at residues 203 to 225 (FGISDIYTSTLSFGLIISLFYLL).

The protein resides in the membrane. This is an uncharacterized protein from Acanthamoeba polyphaga (Amoeba).